A 444-amino-acid polypeptide reads, in one-letter code: Trigger factor (444 aa).

In terms of domain architecture, PPIase FKBP-type spans 160-245; that stretch reads DMQVTFDFEG…VKQVEKPKLP (86 aa).

This sequence belongs to the FKBP-type PPIase family. Tig subfamily.

The protein resides in the cytoplasm. It catalyses the reaction [protein]-peptidylproline (omega=180) = [protein]-peptidylproline (omega=0). In terms of biological role, involved in protein export. Acts as a chaperone by maintaining the newly synthesized protein in an open conformation. Functions as a peptidyl-prolyl cis-trans isomerase. The sequence is that of Trigger factor from Acinetobacter baumannii (strain AB0057).